Reading from the N-terminus, the 262-residue chain is 4-hydroxy-2-oxovalerate aldolase (262 aa).

Catalysis depends on His48, which acts as the Proton acceptor. Residue Gln149 participates in substrate binding. Glu151 is a binding site for Mg(2+). The substrate site is built by Ala176 and Asp177. Asp177 contributes to the Mg(2+) binding site.

This sequence belongs to the HpcH/HpaI aldolase family.

It catalyses the reaction (S)-4-hydroxy-2-oxopentanoate = acetaldehyde + pyruvate. It functions in the pathway xenobiotic degradation; biphenyl degradation. Catalyzes the reversible retro-aldol cleavage of 4-hydroxy-2-oxovalerate to pyruvate and acetaldehyde. The polypeptide is 4-hydroxy-2-oxovalerate aldolase (bphF) (Novosphingobium aromaticivorans (Sphingomonas aromaticivorans)).